We begin with the raw amino-acid sequence, 130 residues long: Small ribosomal subunit protein uS8A (130 aa).

Belongs to the universal ribosomal protein uS8 family.

The protein is Small ribosomal subunit protein uS8A (RpS15Aa) of Drosophila melanogaster (Fruit fly).